The primary structure comprises 482 residues: Glutamyl-tRNA(Gln) amidotransferase subunit A (482 aa).

Catalysis depends on charge relay system residues Lys-75 and Ser-150. Catalysis depends on Ser-174, which acts as the Acyl-ester intermediate.

Belongs to the amidase family. GatA subfamily. In terms of assembly, heterotrimer of A, B and C subunits.

The enzyme catalyses L-glutamyl-tRNA(Gln) + L-glutamine + ATP + H2O = L-glutaminyl-tRNA(Gln) + L-glutamate + ADP + phosphate + H(+). In terms of biological role, allows the formation of correctly charged Gln-tRNA(Gln) through the transamidation of misacylated Glu-tRNA(Gln) in organisms which lack glutaminyl-tRNA synthetase. The reaction takes place in the presence of glutamine and ATP through an activated gamma-phospho-Glu-tRNA(Gln). The polypeptide is Glutamyl-tRNA(Gln) amidotransferase subunit A (Cyanothece sp. (strain PCC 7425 / ATCC 29141)).